A 77-amino-acid polypeptide reads, in one-letter code: DNA-directed RNA polymerase subunit epsilon (77 aa).

Belongs to the RNA polymerase subunit epsilon family. In terms of assembly, RNAP is composed of a core of 2 alpha, a beta and a beta' subunit. The core is associated with a delta subunit, and at least one of epsilon or omega. When a sigma factor is associated with the core the holoenzyme is formed, which can initiate transcription.

The enzyme catalyses RNA(n) + a ribonucleoside 5'-triphosphate = RNA(n+1) + diphosphate. A non-essential component of RNA polymerase (RNAP). In Streptococcus pneumoniae serotype 19F (strain G54), this protein is DNA-directed RNA polymerase subunit epsilon.